Consider the following 102-residue polypeptide: Urease subunit beta (102 aa).

It belongs to the urease beta subunit family. In terms of assembly, heterotrimer of UreA (gamma), UreB (beta) and UreC (alpha) subunits. Three heterotrimers associate to form the active enzyme.

Its subcellular location is the cytoplasm. It carries out the reaction urea + 2 H2O + H(+) = hydrogencarbonate + 2 NH4(+). It participates in nitrogen metabolism; urea degradation; CO(2) and NH(3) from urea (urease route): step 1/1. This chain is Urease subunit beta, found in Acinetobacter baumannii (strain AB307-0294).